Here is a 752-residue protein sequence, read N- to C-terminus: Photosystem I P700 chlorophyll a apoprotein A1 (752 aa).

8 helical membrane-spanning segments follow: residues 73–96, 159–182, 198–222, 294–312, 349–372, 388–414, 436–458, and 533–551; these read IFAA…FHGA, LYVT…FHYH, LNHH…HVSA, ISHH…GHMY, WHAQ…HHMY, LCIF…IFMV, AIIS…LYVH, and FLVH…LILL. Positions 575 and 584 each coordinate [4Fe-4S] cluster. 2 consecutive transmembrane segments (helical) span residues 591-612 and 666-688; these read HVFL…HFSW and LSAY…MFLF. H677 is a binding site for chlorophyll a'. 2 residues coordinate chlorophyll a: M685 and Y693. W694 serves as a coordination point for phylloquinone. A helical transmembrane segment spans residues 726–746; sequence AVGVAHYLLGGIATTWAFFHA.

Belongs to the PsaA/PsaB family. The PsaA/B heterodimer binds the P700 chlorophyll special pair and subsequent electron acceptors. PSI consists of a core antenna complex that captures photons, and an electron transfer chain that converts photonic excitation into a charge separation. The cyanobacterial PSI reaction center is composed of one copy each of PsaA,B,C,D,E,F,I,J,K,L,M and X, and forms trimeric complexes. PSI electron transfer chain: 5 chlorophyll a, 1 chlorophyll a', 2 phylloquinones and 3 4Fe-4S clusters. PSI core antenna: 90 chlorophyll a, 22 carotenoids, 3 phospholipids and 1 galactolipid. P700 is a chlorophyll a/chlorophyll a' dimer, A0 is one or more chlorophyll a, A1 is one or both phylloquinones and FX is a shared 4Fe-4S iron-sulfur center. is required as a cofactor.

Its subcellular location is the cellular thylakoid membrane. It carries out the reaction reduced [plastocyanin] + hnu + oxidized [2Fe-2S]-[ferredoxin] = oxidized [plastocyanin] + reduced [2Fe-2S]-[ferredoxin]. In terms of biological role, psaA and PsaB bind P700, the primary electron donor of photosystem I (PSI), as well as the electron acceptors A0, A1 and FX. PSI is a plastocyanin/cytochrome c6-ferredoxin oxidoreductase, converting photonic excitation into a charge separation, which transfers an electron from the donor P700 chlorophyll pair to the spectroscopically characterized acceptors A0, A1, FX, FA and FB in turn. Oxidized P700 is reduced on the lumenal side of the thylakoid membrane by plastocyanin or cytochrome c6. This Mastigocladus laminosus (Fischerella sp.) protein is Photosystem I P700 chlorophyll a apoprotein A1.